The sequence spans 277 residues: Putative pyruvate, phosphate dikinase regulatory protein (277 aa).

Position 151-158 (Gly-151–Thr-158) interacts with ADP.

This sequence belongs to the pyruvate, phosphate/water dikinase regulatory protein family. PDRP subfamily.

It carries out the reaction N(tele)-phospho-L-histidyl/L-threonyl-[pyruvate, phosphate dikinase] + ADP = N(tele)-phospho-L-histidyl/O-phospho-L-threonyl-[pyruvate, phosphate dikinase] + AMP + H(+). It catalyses the reaction N(tele)-phospho-L-histidyl/O-phospho-L-threonyl-[pyruvate, phosphate dikinase] + phosphate + H(+) = N(tele)-phospho-L-histidyl/L-threonyl-[pyruvate, phosphate dikinase] + diphosphate. Its function is as follows. Bifunctional serine/threonine kinase and phosphorylase involved in the regulation of the pyruvate, phosphate dikinase (PPDK) by catalyzing its phosphorylation/dephosphorylation. The polypeptide is Putative pyruvate, phosphate dikinase regulatory protein (Alkaliphilus metalliredigens (strain QYMF)).